A 181-amino-acid polypeptide reads, in one-letter code: NADH-quinone oxidoreductase subunit B (181 aa).

[4Fe-4S] cluster is bound by residues C45, C46, C111, and C140.

Belongs to the complex I 20 kDa subunit family. NDH-1 is composed of 15 different subunits. Subunits NuoB, C, D, E, F, and G constitute the peripheral sector of the complex. The cofactor is [4Fe-4S] cluster.

Its subcellular location is the cell membrane. The enzyme catalyses a quinone + NADH + 5 H(+)(in) = a quinol + NAD(+) + 4 H(+)(out). In terms of biological role, NDH-1 shuttles electrons from NADH, via FMN and iron-sulfur (Fe-S) centers, to quinones in the respiratory chain. The immediate electron acceptor for the enzyme in this species is believed to be a menaquinone. Couples the redox reaction to proton translocation (for every two electrons transferred, four hydrogen ions are translocated across the cytoplasmic membrane), and thus conserves the redox energy in a proton gradient. This is NADH-quinone oxidoreductase subunit B from Deinococcus radiodurans (strain ATCC 13939 / DSM 20539 / JCM 16871 / CCUG 27074 / LMG 4051 / NBRC 15346 / NCIMB 9279 / VKM B-1422 / R1).